A 437-amino-acid polypeptide reads, in one-letter code: MTPSTDLNLPLFERAKALIPGGVNSPVRAFRAVGGTPRFVQRAQGAYFWDANGQRFIDYIGSWGPMILGHGHPAVLEAVQKAALDGFSFGAPTEREVELAEEILRHVPSMEMIRLVSSGTEAGMSAIRLARGATGRSRIIKFNGCYHGHADALLVKAGSGLATFGHATSAGVPAEVVQHTLVLEYNDIAQLEEAFALHGSEIAGLMIEPIAGNMNFVRASVPFMRRCRELCTQHGALLVFDEVMTGFRVALGSAQSVYARDIPGFQPDITVLGKVIGGGMPLAAFGGPRAIMEQLAPLGPVYQAGTLSGNPVATACGLATLREIARPGFYEALGERTRALTGGLADAARAEGLPFSADSEGGMFGFFLLPELPRNYPTVMTTDGARFNALFHGLLDRGVYIAPALYEAGFVSSAHSAQDIDETIAAAREVFRLVSAG.

Residue lysine 274 is modified to N6-(pyridoxal phosphate)lysine.

The protein belongs to the class-III pyridoxal-phosphate-dependent aminotransferase family. HemL subfamily. Homodimer. Pyridoxal 5'-phosphate is required as a cofactor.

It is found in the cytoplasm. The enzyme catalyses (S)-4-amino-5-oxopentanoate = 5-aminolevulinate. The protein operates within porphyrin-containing compound metabolism; protoporphyrin-IX biosynthesis; 5-aminolevulinate from L-glutamyl-tRNA(Glu): step 2/2. The chain is Glutamate-1-semialdehyde 2,1-aminomutase from Paracidovorax citrulli (strain AAC00-1) (Acidovorax citrulli).